Here is a 245-residue protein sequence, read N- to C-terminus: 1-(5-phosphoribosyl)-5-[(5-phosphoribosylamino)methylideneamino] imidazole-4-carboxamide isomerase (245 aa).

Asp7 serves as the catalytic Proton acceptor. Residue Asp129 is the Proton donor of the active site.

This sequence belongs to the HisA/HisF family.

The protein resides in the cytoplasm. The enzyme catalyses 1-(5-phospho-beta-D-ribosyl)-5-[(5-phospho-beta-D-ribosylamino)methylideneamino]imidazole-4-carboxamide = 5-[(5-phospho-1-deoxy-D-ribulos-1-ylimino)methylamino]-1-(5-phospho-beta-D-ribosyl)imidazole-4-carboxamide. Its pathway is amino-acid biosynthesis; L-histidine biosynthesis; L-histidine from 5-phospho-alpha-D-ribose 1-diphosphate: step 4/9. The sequence is that of 1-(5-phosphoribosyl)-5-[(5-phosphoribosylamino)methylideneamino] imidazole-4-carboxamide isomerase from Shewanella pealeana (strain ATCC 700345 / ANG-SQ1).